A 188-amino-acid chain; its full sequence is MSYGDSREKILSAATRLFQLQGYYGTGLNQIIKESGAPKGSLYYHFPGGKEQLAIEAVNEMKEYIRQKIADCMEACTDPAEGIQAFLKELSCQFSCTEDIEGLPVGLLAAETSLKSEPLREACHEAYKEWASVYEEKLRQTGCSESRAKEASTVVNAMIEGGILLSLTAKNSTPLLHISSCIPDLLKR.

Residues Gly4–Tyr64 form the HTH tetR-type domain. The segment at residues Gly27 to Phe46 is a DNA-binding region (H-T-H motif).

Its function is as follows. Acts as a repressor of the lincomycin-resistance (lmrAB) and yxaGH operons. This chain is HTH-type transcriptional regulator LmrA (lmrA), found in Bacillus subtilis (strain 168).